We begin with the raw amino-acid sequence, 330 residues long: LIM domain-containing protein pin-2 (330 aa).

LIM zinc-binding domains lie at 21–73, 82–132, 144–194, 202–255, and 264–315; these read CERC…CEHD, CAKC…CFLC, CNKC…CPRC, CFDC…CRDD, and CFIC…CKKC.

Expressed in neurons and intestine.

The protein localises to the cytoplasm. The protein resides in the nucleus. The sequence is that of LIM domain-containing protein pin-2 (pin-2) from Caenorhabditis elegans.